The following is a 229-amino-acid chain: Large ribosomal subunit protein uL1 (229 aa).

It belongs to the universal ribosomal protein uL1 family. As to quaternary structure, part of the 50S ribosomal subunit.

In terms of biological role, binds directly to 23S rRNA. The L1 stalk is quite mobile in the ribosome, and is involved in E site tRNA release. Protein L1 is also a translational repressor protein, it controls the translation of the L11 operon by binding to its mRNA. The sequence is that of Large ribosomal subunit protein uL1 from Clostridium perfringens (strain ATCC 13124 / DSM 756 / JCM 1290 / NCIMB 6125 / NCTC 8237 / Type A).